The sequence spans 212 residues: Pyridoxine/pyridoxamine 5'-phosphate oxidase (212 aa).

The tract at residues 1 to 20 (MSDSAMEPQNPLTSGDFTAA) is disordered. Residues 59-64 (RMVLLK), 74-75 (YT), lysine 81, and glutamine 103 contribute to the FMN site. A substrate-binding site is contributed by lysine 64. Residues tyrosine 121, arginine 125, and serine 129 each coordinate substrate. FMN-binding positions include 138-139 (QS) and tryptophan 183. 189–191 (RLH) contacts substrate. Position 193 (arginine 193) interacts with FMN.

Belongs to the pyridoxamine 5'-phosphate oxidase family. Homodimer. FMN is required as a cofactor.

It carries out the reaction pyridoxamine 5'-phosphate + O2 + H2O = pyridoxal 5'-phosphate + H2O2 + NH4(+). The catalysed reaction is pyridoxine 5'-phosphate + O2 = pyridoxal 5'-phosphate + H2O2. It functions in the pathway cofactor metabolism; pyridoxal 5'-phosphate salvage; pyridoxal 5'-phosphate from pyridoxamine 5'-phosphate: step 1/1. Its pathway is cofactor metabolism; pyridoxal 5'-phosphate salvage; pyridoxal 5'-phosphate from pyridoxine 5'-phosphate: step 1/1. In terms of biological role, catalyzes the oxidation of either pyridoxine 5'-phosphate (PNP) or pyridoxamine 5'-phosphate (PMP) into pyridoxal 5'-phosphate (PLP). This Azorhizobium caulinodans (strain ATCC 43989 / DSM 5975 / JCM 20966 / LMG 6465 / NBRC 14845 / NCIMB 13405 / ORS 571) protein is Pyridoxine/pyridoxamine 5'-phosphate oxidase.